The chain runs to 2381 residues: Highly reducing polyketide synthase virA (2381 aa).

The Ketosynthase family 3 (KS3) domain maps to 1–420 (MDALHLACHL…GANGHVILES (420 aa)). Residues Cys-171, His-306, and His-344 each act as for beta-ketoacyl synthase activity in the active site. Positions 535-851 (VFTGQGAQYA…PYSPTLVRKE (317 aa)) are malonyl-CoA:ACP transacylase (MAT) domain. The active-site For malonyltransferase activity is Ser-629. Residues 920–1064 (HELLGTRATA…GSIRVMESTL (145 aa)) are N-terminal hotdog fold. The dehydratase (DH) domain stretch occupies residues 920–1232 (HELLGTRATA…HLRMNEYTGK (313 aa)). Residues 920 to 1235 (HELLGTRATA…MNEYTGKAPV (316 aa)) enclose the PKS/mFAS DH domain. His-952 acts as the Proton acceptor; for dehydratase activity in catalysis. Residues 1078–1235 (HEVWGMSRWY…MNEYTGKAPV (158 aa)) form a C-terminal hotdog fold region. Residue Asp-1144 is the Proton donor; for dehydratase activity of the active site. Residues 1639 to 1956 (GMTDTIHFQQ…NKDRVGKVVV (318 aa)) form an enoyl reductase (ER) domain region. A ketoreductase (KR) domain region spans residues 1981 to 2159 (TYLLVGCLGG…AVSVGLGMIS (179 aa)). One can recognise a Carrier domain in the interval 2297-2375 (TMLDAILRLT…TLAEFIEEKL (79 aa)). Ser-2334 bears the O-(pantetheine 4'-phosphoryl)serine mark.

The protein operates within secondary metabolite biosynthesis. In terms of biological role, highly reducing polyketide synthase; part of the gene cluster that mediates the biosynthesis of virensols and trichoxide, fungal natural products that contain or are derived from a salicylaldehyde core. The pathway begins with the synthesis of the reduced chain in virensol C by the highly reducing polyketide synthase virA via condensation of one acetate and 8 malonate units. VirA has interesting programming rules since the first 2 ketides are fully reduced, the 3 following ketides undergo beta-dehydration, and the last 3 ketides are only reduced to beta-hydroxys to yield the trihydroxy portion. The production of aldehyde virensol C by virA alone is surprising, since virA does not contain a reductase (R) domain that is typically associated with reductive product release in HRPKS. The cupin-domain enzyme virC is involved in enhancing virA product turnover. The short-chain dehydrogenase virB then oxidizes the C-7 alcohol of virensol C to a ketone, yielding virensol D. Virensol D is further transformed to salicylaldehyde 5-deoxyaurocitrin by the short-chain dehydrogenase virD. VirD catalyzes the dehydrogenation of C-3 to form the beta-ketone aldehyde, which is followed by the generation of the nucleophilic C-2 that is required for the intramolecular aldol condensation between C-2 and C-7, itself followed by dehydration and aromatization which leads to salicylaldehyde 5-deoxyaurocitrin. While the dehydrogenation of virensol D is definitely catalyzed by virD, the aldol condensation and dehydration may be uncatalyzed or assisted by virD. The short chain dehydrogenase virG then converts salicylaldehyde 5-deoxyaurocitrin into virensol B which is further hydroxylated by the cytochrome P450 monooxygenase virE to yield the hydroquinone virensol A. VirI then may oxidize virensol A to form the quinone, while virH performs the epoxidation. Finally, the two remaining short-chain dehydrogenases, virK and virL, are probably responsible for reducing the ketones to the corresponding alcohols to furnish the epoxycyclohexanol structure in trichoxide. In Hypocrea virens (strain Gv29-8 / FGSC 10586) (Gliocladium virens), this protein is Highly reducing polyketide synthase virA.